The following is a 119-amino-acid chain: NADH-quinone oxidoreductase subunit A (119 aa).

3 helical membrane passes run 9–29, 63–83, and 88–108; these read IFLFILVGIGVGVAPQVLGYI, LVAILFILFDLEIAFLFPWAV, and IGALGFWSVMVFLTILVVGFI.

It belongs to the complex I subunit 3 family. NDH-1 is composed of 14 different subunits. Subunits NuoA, H, J, K, L, M, N constitute the membrane sector of the complex.

The protein localises to the cell inner membrane. The catalysed reaction is a quinone + NADH + 5 H(+)(in) = a quinol + NAD(+) + 4 H(+)(out). In terms of biological role, NDH-1 shuttles electrons from NADH, via FMN and iron-sulfur (Fe-S) centers, to quinones in the respiratory chain. The immediate electron acceptor for the enzyme in this species is believed to be ubiquinone. Couples the redox reaction to proton translocation (for every two electrons transferred, four hydrogen ions are translocated across the cytoplasmic membrane), and thus conserves the redox energy in a proton gradient. This is NADH-quinone oxidoreductase subunit A from Albidiferax ferrireducens (strain ATCC BAA-621 / DSM 15236 / T118) (Rhodoferax ferrireducens).